An 887-amino-acid chain; its full sequence is Inter-alpha-trypsin inhibitor heavy chain H3 (887 aa).

The signal sequence occupies residues 1–21 (MVTLWWPCLVLALLSGLETSG). Residues 22-33 (FPRSPLRLLGKR) constitute a propeptide that is removed on maturation. The region spanning 29–158 (LLGKRSLPEG…KVIFELTYEE (130 aa)) is the VIT domain. A glycan (N-linked (GlcNAc...) asparagine) is linked at Asn91. The 161-residue stretch at 282 to 442 (PKNIAFVIDV…YNFLESLALE (161 aa)) folds into the VWFA domain. Asn580 carries N-linked (GlcNAc...) asparagine glycosylation. Asp647 is subject to Aspartate 1-(chondroitin 4-sulfate)-ester. Residues 648-887 (PHFIIQVPGK…HTDYIVPSLF (240 aa)) constitute a propeptide that is removed on maturation.

It belongs to the ITIH family. In terms of assembly, I-alpha-I plasma protease inhibitors are assembled from one or two heavy chains (HC) and one light chain, bikunin. Pre-alpha-inhibitor (P-alpha-I) is composed of ITIH3/HC3 and bikunin. Heavy chains are linked to bikunin via chondroitin 4-sulfate esterified to the alpha-carboxyl of the C-terminal aspartate after propeptide cleavage.

It localises to the secreted. Its function is as follows. May act as a carrier of hyaluronan in serum or as a binding protein between hyaluronan and other matrix protein, including those on cell surfaces in tissues to regulate the localization, synthesis and degradation of hyaluronan which are essential to cells undergoing biological processes. This is Inter-alpha-trypsin inhibitor heavy chain H3 (Itih3) from Rattus norvegicus (Rat).